The following is a 362-amino-acid chain: tRNA/tmRNA (uracil-C(5))-methyltransferase (362 aa).

S-adenosyl-L-methionine is bound by residues Gln-182, Tyr-210, Asn-215, Glu-231, and Asp-293. Catalysis depends on Cys-318, which acts as the Nucleophile. The active-site Proton acceptor is Glu-352.

This sequence belongs to the class I-like SAM-binding methyltransferase superfamily. RNA M5U methyltransferase family. TrmA subfamily.

The enzyme catalyses uridine(54) in tRNA + S-adenosyl-L-methionine = 5-methyluridine(54) in tRNA + S-adenosyl-L-homocysteine + H(+). It carries out the reaction uridine(341) in tmRNA + S-adenosyl-L-methionine = 5-methyluridine(341) in tmRNA + S-adenosyl-L-homocysteine + H(+). Its function is as follows. Dual-specificity methyltransferase that catalyzes the formation of 5-methyluridine at position 54 (m5U54) in all tRNAs, and that of position 341 (m5U341) in tmRNA (transfer-mRNA). This is tRNA/tmRNA (uracil-C(5))-methyltransferase from Neisseria meningitidis serogroup A / serotype 4A (strain DSM 15465 / Z2491).